The primary structure comprises 320 residues: O(6)-methylguanine-induced apoptosis 2 (320 aa).

The segment at L46–S91 is disordered. 7 STPGR repeats span residues S49–R82, S91–L103, N132–R163, G173–A192, P213–P233, P254–R266, and P294–S305. Residues P66–F76 show a composition bias toward polar residues. The segment at P207 to P226 is disordered.

It belongs to the STPG1 family.

Its subcellular location is the cytoplasm. It localises to the nucleus. Functionally, may positively contribute to the induction of apoptosis triggered by O(6)-methylguanine. This is O(6)-methylguanine-induced apoptosis 2 (stpg1) from Danio rerio (Zebrafish).